We begin with the raw amino-acid sequence, 488 residues long: Proline--tRNA ligase (488 aa).

This sequence belongs to the class-II aminoacyl-tRNA synthetase family. ProS type 3 subfamily. In terms of assembly, homodimer.

The protein resides in the cytoplasm. The catalysed reaction is tRNA(Pro) + L-proline + ATP = L-prolyl-tRNA(Pro) + AMP + diphosphate. Catalyzes the attachment of proline to tRNA(Pro) in a two-step reaction: proline is first activated by ATP to form Pro-AMP and then transferred to the acceptor end of tRNA(Pro). This is Proline--tRNA ligase from Symbiobacterium thermophilum (strain DSM 24528 / JCM 14929 / IAM 14863 / T).